The following is a 600-amino-acid chain: MTTQAPPNALLPLSPEQLARLQTATHDFTPTQLAWLSGYFWGMVNQQPGAAVMQKPAAPASVITLISASQTGNARRVAEALRDDLLAAQLNVNLVNAGDYKFKQIAQEKLLIVVASTQGEGDPPEEAVALHKFLLSKKAPKLDGTAFAVFGLGDTSYEHFCQAGKDFDTRLAELGAERLLDRVDADVEYQAAAQAWRQRVVDVLKARVPKEAPSQAAITASGAVNLVDSTPYTKESPLTATLSVNQKITGRHSEKDVRHIEIDLGDAGLRYQPGDALGVWYQNDPALVQELLELLWLKGDEPVTVGEKTLPLSEALQWHFELTVNTAAIVENYATLTRSEALLPLVGDKAKLQDYAARTPIVDMVRFAPAQLEADQLLGLLRPLTPRLYSIASSQAEVENEVHITVGVVRFDIEGRVRAGGASSYLADRLEEDSEVRVFIEHNDNFRLPATPETPVIMIGPGTGIAPFRAFMQQREADGATGKNWLFFGNPHFTEDFLYQVEWQRYVKEGLLTRIDLAWSRDQDHKIYVQDKIREQGAELWRWLQEGAHLYVCGDANRMAKDVEQALLEVIAAYGGMDAEAADEYLSELRVERRYQRDVY.

The Flavodoxin-like domain occupies 63–201; that stretch reads ITLISASQTG…AAQAWRQRVV (139 aa). Residues 69-74, 116-119, and 152-161 contribute to the FMN site; these read SQTGNA, STQG, and LGDTSYEHFC. The 215-residue stretch at 235–449 folds into the FAD-binding FR-type domain; the sequence is ESPLTATLSV…IEHNDNFRLP (215 aa). FAD contacts are provided by residues threonine 323, alanine 357, 387–390, 405–407, and 420–423; these read RLYS, TVG, and GGAS. NADP(+)-binding positions include 520–521, 526–530, and aspartate 562; these read SR and KIYVQ. Tyrosine 600 contributes to the FAD binding site.

The protein belongs to the NADPH-dependent sulphite reductase flavoprotein subunit CysJ family. This sequence in the N-terminal section; belongs to the flavodoxin family. In the C-terminal section; belongs to the flavoprotein pyridine nucleotide cytochrome reductase family. As to quaternary structure, alpha(8)-beta(8). The alpha component is a flavoprotein, the beta component is a hemoprotein. The cofactor is FAD. FMN serves as cofactor.

The enzyme catalyses hydrogen sulfide + 3 NADP(+) + 3 H2O = sulfite + 3 NADPH + 4 H(+). It functions in the pathway sulfur metabolism; hydrogen sulfide biosynthesis; hydrogen sulfide from sulfite (NADPH route): step 1/1. Component of the sulfite reductase complex that catalyzes the 6-electron reduction of sulfite to sulfide. This is one of several activities required for the biosynthesis of L-cysteine from sulfate. The flavoprotein component catalyzes the electron flow from NADPH -&gt; FAD -&gt; FMN to the hemoprotein component. This Cronobacter sakazakii (strain ATCC BAA-894) (Enterobacter sakazakii) protein is Sulfite reductase [NADPH] flavoprotein alpha-component.